The sequence spans 566 residues: Probable F-box protein At5g39490 (566 aa).

One can recognise an F-box domain in the interval 8-54 (ACLLLMLPEDIFVVISRFLSPSDICNLILCGKSLRALVDSEKTWLVQ). Residues 318 to 338 (LRKSSSSKNTTPSQSEIRHSN) are disordered. Positions 320 to 332 (KSSSSKNTTPSQS) are enriched in low complexity.

This chain is Probable F-box protein At5g39490, found in Arabidopsis thaliana (Mouse-ear cress).